The primary structure comprises 244 residues: 7-cyano-7-deazaguanine synthase (244 aa).

14–24 (FSGGQDSATCV) lines the ATP pocket. Cys-202, Cys-217, Cys-220, and Cys-223 together coordinate Zn(2+).

Belongs to the QueC family. The cofactor is Zn(2+).

The enzyme catalyses 7-carboxy-7-deazaguanine + NH4(+) + ATP = 7-cyano-7-deazaguanine + ADP + phosphate + H2O + H(+). Its pathway is purine metabolism; 7-cyano-7-deazaguanine biosynthesis. In terms of biological role, catalyzes the ATP-dependent conversion of 7-carboxy-7-deazaguanine (CDG) to 7-cyano-7-deazaguanine (preQ(0)). This Burkholderia ambifaria (strain MC40-6) protein is 7-cyano-7-deazaguanine synthase.